The following is a 437-amino-acid chain: ATP-dependent protease ATPase subunit HslU (437 aa).

ATP contacts are provided by residues Val-18, 60–65 (GCGKTE), Asp-250, Glu-315, and Arg-387.

Belongs to the ClpX chaperone family. HslU subfamily. A double ring-shaped homohexamer of HslV is capped on each side by a ring-shaped HslU homohexamer. The assembly of the HslU/HslV complex is dependent on binding of ATP.

The protein resides in the cytoplasm. In terms of biological role, ATPase subunit of a proteasome-like degradation complex; this subunit has chaperone activity. The binding of ATP and its subsequent hydrolysis by HslU are essential for unfolding of protein substrates subsequently hydrolyzed by HslV. HslU recognizes the N-terminal part of its protein substrates and unfolds these before they are guided to HslV for hydrolysis. This Methylobacterium sp. (strain 4-46) protein is ATP-dependent protease ATPase subunit HslU.